A 379-amino-acid chain; its full sequence is Anhydro-N-acetylmuramic acid kinase (379 aa).

9-16 (GTSVDGID) is an ATP binding site.

Belongs to the anhydro-N-acetylmuramic acid kinase family.

It carries out the reaction 1,6-anhydro-N-acetyl-beta-muramate + ATP + H2O = N-acetyl-D-muramate 6-phosphate + ADP + H(+). Its pathway is amino-sugar metabolism; 1,6-anhydro-N-acetylmuramate degradation. It functions in the pathway cell wall biogenesis; peptidoglycan recycling. Functionally, catalyzes the specific phosphorylation of 1,6-anhydro-N-acetylmuramic acid (anhMurNAc) with the simultaneous cleavage of the 1,6-anhydro ring, generating MurNAc-6-P. Is required for the utilization of anhMurNAc either imported from the medium or derived from its own cell wall murein, and thus plays a role in cell wall recycling. In Picosynechococcus sp. (strain ATCC 27264 / PCC 7002 / PR-6) (Agmenellum quadruplicatum), this protein is Anhydro-N-acetylmuramic acid kinase.